Consider the following 469-residue polypeptide: Uronate isomerase (469 aa).

The protein belongs to the metallo-dependent hydrolases superfamily. Uronate isomerase family.

The catalysed reaction is D-glucuronate = D-fructuronate. The enzyme catalyses aldehydo-D-galacturonate = keto-D-tagaturonate. The protein operates within carbohydrate metabolism; pentose and glucuronate interconversion. In Mesorhizobium japonicum (strain LMG 29417 / CECT 9101 / MAFF 303099) (Mesorhizobium loti (strain MAFF 303099)), this protein is Uronate isomerase.